A 133-amino-acid chain; its full sequence is Exosome complex protein C1739.07 (133 aa).

A disordered region spans residues V96–T133. Residues A102–N116 show a composition bias toward low complexity.

This sequence belongs to the C1D family. Component of the exosome multienzyme ribonuclease complex. Interacts with cut3.

The protein resides in the cytoplasm. The protein localises to the nucleus. In terms of biological role, required for exosome-dependent processing of pre-rRNA and small nucleolar RNA (snRNA) precursors. Involved in processing of 35S pre-rRNA at the A0, A1 and A2 sites. The protein is Exosome complex protein C1739.07 of Schizosaccharomyces pombe (strain 972 / ATCC 24843) (Fission yeast).